The sequence spans 346 residues: UDP-N-acetylenolpyruvoylglucosamine reductase (346 aa).

An FAD-binding PCMH-type domain is found at 18 to 189; the sequence is LRAQARAFIA…VSVVFALKTH (172 aa). Arginine 165 is an active-site residue. The active-site Proton donor is the serine 240. The active site involves glutamate 336.

It belongs to the MurB family. FAD serves as cofactor.

It is found in the cytoplasm. It carries out the reaction UDP-N-acetyl-alpha-D-muramate + NADP(+) = UDP-N-acetyl-3-O-(1-carboxyvinyl)-alpha-D-glucosamine + NADPH + H(+). The protein operates within cell wall biogenesis; peptidoglycan biosynthesis. In terms of biological role, cell wall formation. This Neisseria meningitidis serogroup C (strain 053442) protein is UDP-N-acetylenolpyruvoylglucosamine reductase.